Consider the following 415-residue polypeptide: Protrudin (415 aa).

The disordered stretch occupies residues 1–24 (MQTSDRDLSGPEASPSGMPEVLSE). The Cytoplasmic portion of the chain corresponds to 1-66 (MQTSDRDLSG…AGDGVRYLLR (66 aa)). The interval 1 to 92 (MQTSDRDLSG…LFLTLNEGAW (92 aa)) is sufficient for homooligomerization. Residues 1–210 (MQTSDRDLSG…LYLLPLCWVL (210 aa)) are sufficient for localization to endoplasmic reticulum tubular network and for interactions with REEP1, REEP5, ATL1, ATL2, ATL3 and SPAST. The necessary for interaction with RAB11A and function in neurite outgrowth stretch occupies residues 51 to 64 (LEPLKDAGDGVRYL). The chain crosses the membrane as a helical span at residues 67–87 (WQMPLCSLLTCLGLNILFLTL). Residue Asn88 is a topological domain, lumenal. Residues 89–109 (EGAWYSMGALMISVPALLGYL) traverse the membrane as a helical segment. Residues 110-192 (QEVCRGQLPE…NPVVSSQFYG (83 aa)) are Cytoplasmic-facing. An intramembrane region (helical) is located at residues 193-213 (ALLGMVCMLYLLPLCWVLALL). Residues 214-415 (NSTLFLGNGD…CASCNQTLSK (202 aa)) are Cytoplasmic-facing. The interval 254 to 290 (QGAGGRGLLDSSPAPTPTEDLTPGSVEEAEEAEPDEE) is disordered. Residues 275-365 (TPGSVEEAEE…GCAATFSVLK (91 aa)) are necessary for interaction with KIF5A. The segment covering 280–290 (EEAEEAEPDEE) has biased composition (acidic residues). Positions 290–296 (EFKDAIE) are necessary for interaction with VAPA. The FYVE-type zinc finger occupies 348–414 (TNNFGNCAGC…VCASCNQTLS (67 aa)). Zn(2+)-binding residues include Cys354, Cys357, Cys370, Cys373, Cys378, Cys381, Cys406, and Cys409.

Can form homooligomers (monomers, dimers and tetramers). Interacts with RAB11A (GDP-bound form); regulates RAB11A. Interacts with FKBP8; may negatively regulate ZFYVE27 phosphorylation. Isoform 1 interacts to a greater extent than isoform 2 with VAPB (via MSP domain). Isoform 1 interacts to a greater extent than isoform 2 with VAPA (via MSP domain). Interaction with VAPA may regulate ZFYVE27 retention in the endoplasmic reticulum and its function in cell projections formation. Interacts with ATL2, ATL3, SPAST and RTN3. Interacts with REEP1, REEP5 and ATL1. Interacts with RAB11B (GDP-bound form), SURF4, KIF5B and KIF5C. Isoform 1 and 2 interact with KIFA. Phosphorylated. Phosphorylation is induced by NGF through the MAPK/ERK pathway and modulates interaction with RAB11A. Astrocytes express both isoform 1 and isoform 2 and oligodendrocytes express only isoform 2 (at protein level). Isoform 1 is expressed specifically in the central nervous system and selectively in neuronal cells. Isoform 2 is expressed in cerebrum, cerebellum, spinal cord, heart, thymus, spleen, intestine and lung.

It localises to the recycling endosome membrane. It is found in the endoplasmic reticulum membrane. Its subcellular location is the cell projection. The protein localises to the growth cone membrane. Key regulator of RAB11-dependent vesicular trafficking during neurite extension through polarized membrane transport. Promotes axonal elongation and contributes to the establishment of neuronal cell polarity. Involved in nerve growth factor-induced neurite formation in VAPA-dependent manner. Contributes to both the formation and stabilization of the tubular ER network. Involved in ER morphogenesis by regulating the sheet-to-tubule balance and possibly the density of tubule interconnections. Acts as an adapter protein that facilitates the interaction of KIF5A with VAPA, VAPB, SURF4, RAB11A, RAB11B and RTN3 and the ZFYVE27-KIF5A complex contributes to the transport of these proteins in neurons. Can induce formation of neurite-like membrane protrusions in non-neuronal cells in a KIF5A/B-dependent manner. The polypeptide is Protrudin (Zfyve27) (Mus musculus (Mouse)).